The primary structure comprises 448 residues: Glucose-6-phosphate isomerase (448 aa).

Residue Glu290 is the Proton donor of the active site. Catalysis depends on residues His311 and Lys425.

It belongs to the GPI family.

Its subcellular location is the cytoplasm. The catalysed reaction is alpha-D-glucose 6-phosphate = beta-D-fructose 6-phosphate. It functions in the pathway carbohydrate biosynthesis; gluconeogenesis. Its pathway is carbohydrate degradation; glycolysis; D-glyceraldehyde 3-phosphate and glycerone phosphate from D-glucose: step 2/4. Its function is as follows. Catalyzes the reversible isomerization of glucose-6-phosphate to fructose-6-phosphate. This Levilactobacillus brevis (strain ATCC 367 / BCRC 12310 / CIP 105137 / JCM 1170 / LMG 11437 / NCIMB 947 / NCTC 947) (Lactobacillus brevis) protein is Glucose-6-phosphate isomerase.